Consider the following 137-residue polypeptide: Acidic phospholipase A2 Vur-PL3 (137 aa).

The first 16 residues, 1–16 (MRTLWIVAVCLIGVEG), serve as a signal peptide directing secretion. Disulfide bonds link C42–C131, C44–C60, C59–C111, C65–C137, C66–C104, C73–C97, and C91–C102. Residues Y43, G45, and G47 each contribute to the Ca(2+) site. The active site involves H63. D64 lines the Ca(2+) pocket. D105 is a catalytic residue.

It depends on Ca(2+) as a cofactor. In terms of tissue distribution, expressed by the venom gland.

It localises to the secreted. It catalyses the reaction a 1,2-diacyl-sn-glycero-3-phosphocholine + H2O = a 1-acyl-sn-glycero-3-phosphocholine + a fatty acid + H(+). In Vipera renardi (Steppe viper), this protein is Acidic phospholipase A2 Vur-PL3.